A 183-amino-acid polypeptide reads, in one-letter code: Tumor necrosis factor ligand superfamily member 4 (183 aa).

Residues 1-23 (MERVQPLEENVGNAARPRFERNK) are Cytoplasmic-facing. A helical; Signal-anchor for type II membrane protein membrane pass occupies residues 24–50 (LLLVASVIQGLGLLLCFTYICLHFSAL). One can recognise a THD domain in the interval 51–173 (QVSHRYPRIQ…HVNGGELILI (123 aa)). Residues 51–183 (QVSHRYPRIQ…HQNPGEFCVL (133 aa)) are Extracellular-facing. Asn90, Asn114, Asn152, and Asn157 each carry an N-linked (GlcNAc...) asparagine glycan. A disulfide bridge connects residues Cys97 and Cys181.

This sequence belongs to the tumor necrosis factor family. Homotrimer.

It localises to the membrane. In terms of biological role, cytokine that binds to TNFRSF4. Co-stimulates T-cell proliferation and cytokine production. The sequence is that of Tumor necrosis factor ligand superfamily member 4 (TNFSF4) from Homo sapiens (Human).